Reading from the N-terminus, the 283-residue chain is Elongation factor Ts (283 aa).

An involved in Mg(2+) ion dislocation from EF-Tu region spans residues 80–83 (TDFV).

Belongs to the EF-Ts family.

The protein localises to the cytoplasm. Associates with the EF-Tu.GDP complex and induces the exchange of GDP to GTP. It remains bound to the aminoacyl-tRNA.EF-Tu.GTP complex up to the GTP hydrolysis stage on the ribosome. The chain is Elongation factor Ts from Serratia proteamaculans (strain 568).